The sequence spans 240 residues: MSSPSFRVAILANFILDDTGGRPMIDKITQLIRQSKPDAEINVYAAIEGDTLPDPETKDLIILTGGPFNLLKDERPKWVVDTLEYLKTVTAGPSKPKILGICWGQQAIALALGGALGKSDKGQIVGIADIPLTPEGTKFFESPSLTIHKNHEILVTDIGPHLLPLALNNEVLMSKDGQVLTFQGHPEMDSVLSRLFVASDNPVLVGAGSDSGLKPIDSPHDGEIIFERIVRWASPETAHS.

A Glutamine amidotransferase type-1 domain is found at 13-205; the sequence is NFILDDTGGR…FVASDNPVLV (193 aa). Cys102 (nucleophile) is an active-site residue. Residues His185 and Glu187 contribute to the active site.

The protein belongs to the peptidase C26 family.

It participates in pigment biosynthesis. In terms of biological role, glutamine amidotransferase-like protein; part of the gene cluster that mediates the biosynthesis of the yellow pigment chrysogine. Pyruvic acid and anthranilic acid are likely substrates for the nonribosomal peptide synthetase chry1/NRPS14, with pyruvic acid adenylated by the first A domain and anthranilic acid by the second. If pyruvic acid and anthranilic acid are merged and released from chry1/NRPS14 by hydrolysis, a subsequent amidation would lead to 2-pyruvoylaminobenzamide. This process is probably catalyzed by the amidotransferase chry2 using glutamine as amino donor. The dehydrogenase chry5 that has a terminal berberine bridge domain for C-N cyclization could catalyze the cyclization of 2-pyruvoylaminobenzamide to yield acetyl-4(3H)-quinazolidinone. A final reduction of acetyl-4(3H)-quinazolidinone catalyzed by the oxidoreductase chry4 would result in chrysogine. In Gibberella zeae (strain ATCC MYA-4620 / CBS 123657 / FGSC 9075 / NRRL 31084 / PH-1) (Wheat head blight fungus), this protein is Glutamine amidotransferase-like protein chry6.